The chain runs to 311 residues: Probable manganese-dependent inorganic pyrophosphatase (311 aa).

Positions 9, 13, 15, 75, 97, and 149 each coordinate Mn(2+).

It belongs to the PPase class C family. It depends on Mn(2+) as a cofactor.

It localises to the cytoplasm. The catalysed reaction is diphosphate + H2O = 2 phosphate + H(+). This Lactobacillus johnsonii (strain CNCM I-12250 / La1 / NCC 533) protein is Probable manganese-dependent inorganic pyrophosphatase.